The chain runs to 245 residues: 1-(5-phosphoribosyl)-5-[(5-phosphoribosylamino)methylideneamino] imidazole-4-carboxamide isomerase (245 aa).

Aspartate 7 (proton acceptor) is an active-site residue. Residue aspartate 129 is the Proton donor of the active site.

The protein belongs to the HisA/HisF family.

The protein resides in the cytoplasm. It catalyses the reaction 1-(5-phospho-beta-D-ribosyl)-5-[(5-phospho-beta-D-ribosylamino)methylideneamino]imidazole-4-carboxamide = 5-[(5-phospho-1-deoxy-D-ribulos-1-ylimino)methylamino]-1-(5-phospho-beta-D-ribosyl)imidazole-4-carboxamide. It functions in the pathway amino-acid biosynthesis; L-histidine biosynthesis; L-histidine from 5-phospho-alpha-D-ribose 1-diphosphate: step 4/9. The polypeptide is 1-(5-phosphoribosyl)-5-[(5-phosphoribosylamino)methylideneamino] imidazole-4-carboxamide isomerase (Yersinia pestis bv. Antiqua (strain Antiqua)).